Consider the following 314-residue polypeptide: GDSL-like esterase Rv1075c (314 aa).

The signal sequence occupies residues 1–21; that stretch reads MPRRSTIALATAGALASTGTA. The active-site Nucleophile is S80. The Proton donor role is filled by D244. H247 (proton acceptor) is an active-site residue. Residues 276–314 are disordered; that stretch reads IHETPSRPGTATLEPGHTRHSMMSRLRRPRPARAVPTGG. Over residues 293–306 the composition is skewed to basic residues; the sequence is TRHSMMSRLRRPRP.

It belongs to the 'GDSL' lipolytic enzyme family.

The enzyme catalyses an acetyl ester + H2O = an aliphatic alcohol + acetate + H(+). The catalysed reaction is a butanoate ester + H2O = an aliphatic alcohol + butanoate + H(+). It carries out the reaction triacetin + H2O = diacetylglycerol + acetate + H(+). It catalyses the reaction 1,2,3-tributanoylglycerol + H2O = dibutanoylglycerol + butanoate + H(+). Esterase activity is significantly inhibited by the serine modifier phenylmethylsulfonyl fluoride (PMSF). Completely inhibited by diethyl pyrocarbonate. Its function is as follows. Esterase that preferentially hydrolyzes short-chain fatty acids, particularly pNP-acetate (C2) and pNP-butyrate (C4). Also has weak activity with pNP-hexanoate (C6) and pNP-octanoate (C8). It can also hydrolyze short-chain tryglycerides such as triacetin and tributyrin. Important for intracellular survival. The sequence is that of GDSL-like esterase Rv1075c from Mycobacterium tuberculosis (strain ATCC 25618 / H37Rv).